The chain runs to 125 residues: Large ribosomal subunit protein bL12 (125 aa).

This sequence belongs to the bacterial ribosomal protein bL12 family. As to quaternary structure, homodimer. Part of the ribosomal stalk of the 50S ribosomal subunit. Forms a multimeric L10(L12)X complex, where L10 forms an elongated spine to which 2 to 4 L12 dimers bind in a sequential fashion. Binds GTP-bound translation factors.

Functionally, forms part of the ribosomal stalk which helps the ribosome interact with GTP-bound translation factors. Is thus essential for accurate translation. The chain is Large ribosomal subunit protein bL12 from Heliobacterium modesticaldum (strain ATCC 51547 / Ice1).